Here is a 286-residue protein sequence, read N- to C-terminus: Pyridoxal kinase PdxY (286 aa).

Substrate is bound by residues S9 and 44–45 (TQ). Residues D111, A143, E148, K181, and 208–211 (RPLV) each bind ATP. D223 provides a ligand contact to substrate.

Belongs to the pyridoxine kinase family. PdxY subfamily. As to quaternary structure, homodimer. The cofactor is Mg(2+).

The enzyme catalyses pyridoxal + ATP = pyridoxal 5'-phosphate + ADP + H(+). It functions in the pathway cofactor metabolism; pyridoxal 5'-phosphate salvage; pyridoxal 5'-phosphate from pyridoxal: step 1/1. Its function is as follows. Pyridoxal kinase involved in the salvage pathway of pyridoxal 5'-phosphate (PLP). Catalyzes the phosphorylation of pyridoxal to PLP. The protein is Pyridoxal kinase PdxY of Salmonella choleraesuis (strain SC-B67).